A 90-amino-acid chain; its full sequence is Essential MCU regulator, mitochondrial (90 aa).

Over 1-48 the chain is Mitochondrial matrix; sequence MVLSRLNPIVKQCVLGNRPNLVSLGPVRTAVYSKSGGLLPEPHRTSFG. The chain crosses the membrane as a helical span at residues 49–76; the sequence is IIRLILTVVPGLLIGAAISKNIANFLEE. The Mitochondrial intermembrane portion of the chain corresponds to 77–90; it reads NDLFVPSDDDDDDD.

Belongs to the SMDT1/EMRE family. In terms of assembly, component of the uniplex complex, composed of MCU, EMRE, MICU1 and MICU2 in a 4:4:1:1 stoichiometry.

It localises to the mitochondrion inner membrane. In terms of biological role, essential regulatory subunit of the mitochondrial calcium uniporter complex (uniplex), a complex that mediates calcium uptake into mitochondria. Required to bridge the calcium-sensing proteins MICU1 with the calcium-conducting subunit MCU. Acts by mediating activation of MCU and retention of MICU1 to the MCU pore, in order to ensure tight regulation of the uniplex complex and appropriate responses to intracellular calcium signaling. The protein is Essential MCU regulator, mitochondrial (EMRE) of Tribolium castaneum (Red flour beetle).